The following is an 89-amino-acid chain: Small ribosomal subunit protein uS15 (89 aa).

It belongs to the universal ribosomal protein uS15 family. In terms of assembly, part of the 30S ribosomal subunit. Forms a bridge to the 50S subunit in the 70S ribosome, contacting the 23S rRNA.

Its function is as follows. One of the primary rRNA binding proteins, it binds directly to 16S rRNA where it helps nucleate assembly of the platform of the 30S subunit by binding and bridging several RNA helices of the 16S rRNA. In terms of biological role, forms an intersubunit bridge (bridge B4) with the 23S rRNA of the 50S subunit in the ribosome. In Marinobacter nauticus (strain ATCC 700491 / DSM 11845 / VT8) (Marinobacter aquaeolei), this protein is Small ribosomal subunit protein uS15.